The sequence spans 102 residues: Small ribosomal subunit protein uS10 (102 aa).

This sequence belongs to the universal ribosomal protein uS10 family. In terms of assembly, part of the 30S ribosomal subunit.

Involved in the binding of tRNA to the ribosomes. The polypeptide is Small ribosomal subunit protein uS10 (Roseiflexus castenholzii (strain DSM 13941 / HLO8)).